Consider the following 147-residue polypeptide: Response regulator Rcp1 (147 aa).

Positions Val10–Glu135 constitute a Response regulatory domain. Asp68 carries the post-translational modification 4-aspartylphosphate.

Phosphorylated by Cph1.

Forms a two-component system with Cph1 in which it acts as receiver substrate. The sequence is that of Response regulator Rcp1 (rcp1) from Synechocystis sp. (strain ATCC 27184 / PCC 6803 / Kazusa).